The chain runs to 389 residues: Succinate--CoA ligase [ADP-forming] subunit beta (389 aa).

Positions 9-236 (KELFAKHEVP…KDATDPLELK (228 aa)) constitute an ATP-grasp domain. ATP contacts are provided by residues K45, 52–54 (GRG), S94, and E99. Residues N191 and D205 each coordinate Mg(2+). Residues N256 and 318 to 320 (GIT) each bind substrate.

Belongs to the succinate/malate CoA ligase beta subunit family. Heterotetramer of two alpha and two beta subunits. Mg(2+) is required as a cofactor.

It carries out the reaction succinate + ATP + CoA = succinyl-CoA + ADP + phosphate. It catalyses the reaction GTP + succinate + CoA = succinyl-CoA + GDP + phosphate. It participates in carbohydrate metabolism; tricarboxylic acid cycle; succinate from succinyl-CoA (ligase route): step 1/1. Its function is as follows. Succinyl-CoA synthetase functions in the citric acid cycle (TCA), coupling the hydrolysis of succinyl-CoA to the synthesis of either ATP or GTP and thus represents the only step of substrate-level phosphorylation in the TCA. The beta subunit provides nucleotide specificity of the enzyme and binds the substrate succinate, while the binding sites for coenzyme A and phosphate are found in the alpha subunit. This is Succinate--CoA ligase [ADP-forming] subunit beta from Rhodococcus jostii (strain RHA1).